Reading from the N-terminus, the 679-residue chain is uncharacterized protein (679 aa).

12 consecutive transmembrane segments (helical) span residues 23 to 41 (YALRNTIAMCLALTFAYYL), 46 to 65 (PYWAMTSAAVVSFPTVGGVI), 72 to 90 (IAGSLLGATAALIIAGHTL), 94 to 113 (WLFLFSMAAWIGFCTWACAH), 120 to 142 (YAFQLSGYTAAIIAFPMVNIVEI), 157 to 179 (IVGILCGGMMMMILPSTSDGTAL), 362 to 381 (WSGVRTFCTLTVIGAWSIGA), 385 to 404 (SGPGALTLAAISCVLYSIVA), 411 to 433 (SLLMRTLVLLSLFSFVVKFGLMV), 438 to 455 (LWQFLLFLFPLFVTMQLL), 462 to 481 (LAGLWGQLIVFMGSFIAVTN), and 496 to 515 (AKIVGVAISWLAFAILRPGS).

It belongs to the aromatic acid exporter ArAE (TC 2.A.85) family.

The protein resides in the cell membrane. This is an uncharacterized protein from Salmonella typhimurium (strain LT2 / SGSC1412 / ATCC 700720).